The chain runs to 546 residues: MAAKDVVFGDSARAKMVEGVNILANAVKVTLGPKGRNVVLERSFGGPTVTKDGVSVAKEIELKDKLQNMGAQMVKEVASKTSDNAGDGTTTATVLAQSIVREGMKYVASGMNPMDLKRGIDKAVFAAIEELRKISKPCTTNKEIAQVGAISANSDSSIGDRIAEAMDKVGKEGVITVEDGKSLQDELDVVEGMQFDRGYLSPYFINNPDKQVAVLENPFVLLHDKKVSNIRDLLPILEQVAKAGRPLLIIAEDVEGEALATLVVNNIRGILKTVAVKAPGFGDRRKAMLEDIAILTGGQVIAEETGLTLEKATLAELGQAKRIEVAKENTTIIDGAGEAANIEARVKQVRTQIEEATSDYDREKLQERVAKLAGGVAVIKVGAATEVEMKEKKARVEDALHATRAAVEEGIVAGGGVALIRARTAIAGLKGANADQDAGIKIVLRAMEEPLRQIVTNGGEEASVVVAAVAAGTGNYGYNAATGEYVDLVDAGVVDPTKVTRTALQNAASVAGLLLTTDAAVCELPKEDAPMAGGMPGGMGGMGMDM.

Residues 30–33 (TLGP), Lys51, 87–91 (DGTTT), Gly415, 479–481 (NAA), and Asp495 each bind ATP.

The protein belongs to the chaperonin (HSP60) family. In terms of assembly, forms a cylinder of 14 subunits composed of two heptameric rings stacked back-to-back. Interacts with the co-chaperonin GroES.

Its subcellular location is the cytoplasm. The catalysed reaction is ATP + H2O + a folded polypeptide = ADP + phosphate + an unfolded polypeptide.. In terms of biological role, together with its co-chaperonin GroES, plays an essential role in assisting protein folding. The GroEL-GroES system forms a nano-cage that allows encapsulation of the non-native substrate proteins and provides a physical environment optimized to promote and accelerate protein folding. In Paraburkholderia xenovorans (strain LB400), this protein is Chaperonin GroEL 1.